The chain runs to 389 residues: uncharacterized protein (389 aa).

4 helical membrane passes run 31 to 51 (LFIV…VEVI), 96 to 116 (IMQI…ALLV), 123 to 143 (APLV…MFPP), and 152 to 172 (MIDA…LPSS).

It to M.tuberculosis Rv2571c.

Its subcellular location is the cell membrane. This is an uncharacterized protein from Corynebacterium glutamicum (strain ATCC 13032 / DSM 20300 / JCM 1318 / BCRC 11384 / CCUG 27702 / LMG 3730 / NBRC 12168 / NCIMB 10025 / NRRL B-2784 / 534).